An 859-amino-acid chain; its full sequence is Leucine--tRNA ligase (859 aa).

Positions 42 to 52 match the 'HIGH' region motif; that stretch reads PYPSGRLHMGH. A 'KMSKS' region motif is present at residues 618-622; the sequence is KMSKS. An ATP-binding site is contributed by K621.

Belongs to the class-I aminoacyl-tRNA synthetase family.

Its subcellular location is the cytoplasm. The catalysed reaction is tRNA(Leu) + L-leucine + ATP = L-leucyl-tRNA(Leu) + AMP + diphosphate. This chain is Leucine--tRNA ligase, found in Shewanella baltica (strain OS185).